The primary structure comprises 182 residues: Crossover junction endodeoxyribonuclease RuvC (182 aa).

Catalysis depends on residues aspartate 7, glutamate 67, and aspartate 139. Mg(2+) is bound by residues aspartate 7, glutamate 67, and aspartate 139.

This sequence belongs to the RuvC family. Homodimer which binds Holliday junction (HJ) DNA. The HJ becomes 2-fold symmetrical on binding to RuvC with unstacked arms; it has a different conformation from HJ DNA in complex with RuvA. In the full resolvosome a probable DNA-RuvA(4)-RuvB(12)-RuvC(2) complex forms which resolves the HJ. Requires Mg(2+) as cofactor.

The protein resides in the cytoplasm. It catalyses the reaction Endonucleolytic cleavage at a junction such as a reciprocal single-stranded crossover between two homologous DNA duplexes (Holliday junction).. The RuvA-RuvB-RuvC complex processes Holliday junction (HJ) DNA during genetic recombination and DNA repair. Endonuclease that resolves HJ intermediates. Cleaves cruciform DNA by making single-stranded nicks across the HJ at symmetrical positions within the homologous arms, yielding a 5'-phosphate and a 3'-hydroxyl group; requires a central core of homology in the junction. The consensus cleavage sequence is 5'-(A/T)TT(C/G)-3'. Cleavage occurs on the 3'-side of the TT dinucleotide at the point of strand exchange. HJ branch migration catalyzed by RuvA-RuvB allows RuvC to scan DNA until it finds its consensus sequence, where it cleaves and resolves the cruciform DNA. The protein is Crossover junction endodeoxyribonuclease RuvC of Bordetella petrii (strain ATCC BAA-461 / DSM 12804 / CCUG 43448).